The primary structure comprises 179 residues: Peptide deformylase 2 (179 aa).

The Fe cation site is built by Cys101 and His143. Glu144 is a catalytic residue. Fe cation is bound at residue His147.

It belongs to the polypeptide deformylase family. Fe(2+) is required as a cofactor.

The enzyme catalyses N-terminal N-formyl-L-methionyl-[peptide] + H2O = N-terminal L-methionyl-[peptide] + formate. Its function is as follows. Removes the formyl group from the N-terminal Met of newly synthesized proteins. Requires at least a dipeptide for an efficient rate of reaction. N-terminal L-methionine is a prerequisite for activity but the enzyme has broad specificity at other positions. The protein is Peptide deformylase 2 of Pseudomonas syringae pv. tomato (strain ATCC BAA-871 / DC3000).